Here is a 422-residue protein sequence, read N- to C-terminus: Light-independent protochlorophyllide reductase subunit N (422 aa).

3 residues coordinate [4Fe-4S] cluster: Cys26, Cys51, and Cys112.

It belongs to the BchN/ChlN family. As to quaternary structure, protochlorophyllide reductase is composed of three subunits; BchL, BchN and BchB. Forms a heterotetramer of two BchB and two BchN subunits. [4Fe-4S] cluster serves as cofactor.

The enzyme catalyses chlorophyllide a + oxidized 2[4Fe-4S]-[ferredoxin] + 2 ADP + 2 phosphate = protochlorophyllide a + reduced 2[4Fe-4S]-[ferredoxin] + 2 ATP + 2 H2O. Its pathway is porphyrin-containing compound metabolism; bacteriochlorophyll biosynthesis (light-independent). Functionally, component of the dark-operative protochlorophyllide reductase (DPOR) that uses Mg-ATP and reduced ferredoxin to reduce ring D of protochlorophyllide (Pchlide) to form chlorophyllide a (Chlide). This reaction is light-independent. The NB-protein (BchN-BchB) is the catalytic component of the complex. This is Light-independent protochlorophyllide reductase subunit N from Acidiphilium rubrum.